Reading from the N-terminus, the 4582-residue chain is Probable transcription-associated protein 1 (4582 aa).

A compositionally biased stretch (pro residues) spans 1-11 (MSTNPPQPPPS). Disordered stretches follow at residues 1–52 (MSTN…SSGN), 219–276 (TTTA…TTTT), 556–581 (KEKEKELKDPQSLKDKLDGLSSANTT), 794–821 (VGGSGGSNSSGGGGGGGSNSSNNSTNSN), 1152–1195 (ENEN…NNNI), 1483–1570 (QSTT…STIN), 2341–2410 (SIKT…NIDD), 2537–2567 (TTTTPVSSTTTTEQSSDSSSLPPPPPVQVTK), 2637–2662 (SDGGTGSLANKPLSSSGSTSQTGGAS), and 2741–2789 (SPST…TTTE). Positions 25 to 37 (PMSTTNPSQPTIT) are enriched in polar residues. Composition is skewed to low complexity over residues 38-50 (SSSAASSSSSSSS), 219-250 (TTTAISPTTTTTTTPATATTPATTTATGNTIT), and 258-276 (PSTTATAISPTSSTTTTTT). A compositionally biased stretch (basic and acidic residues) spans 556–573 (KEKEKELKDPQSLKDKLD). Positions 794–811 (VGGSGGSNSSGGGGGGGS) are enriched in gly residues. Low complexity-rich tracts occupy residues 812-821 (NSSNNSTNSN), 1158-1194 (DNNNNNNNNNNNNNNNNNNNNNNNNNNNNNNNNNNNN), 1484-1504 (STTTASTTETAATTTTTETAT), 1515-1568 (TEPT…SSST), and 2341-2367 (SIKTSSSSLPTTTTTTTSSNKPTDSSS). Residues 2378-2398 (SITTPSQGGVATPNVSDSTPT) are compositionally biased toward polar residues. Low complexity-rich tracts occupy residues 2537–2556 (TTTTPVSSTTTTEQSSDSSS) and 2650–2662 (SSSGSTSQTGGAS). The stretch at 2944 to 2991 (NDINQQQQQQQQQQQQQQQQQQQQQQQQQQQQQQQQQQQQQQHHQQEQ) forms a coiled coil. Residues 3185 to 3815 (VISFLGENYN…YYHFRKLVLE (631 aa)) form the FAT domain. 2 stretches are compositionally biased toward low complexity: residues 3491–3509 (TNTTTTITNPDGTTTTTTT) and 3824–3916 (TTSP…ANTT). Disordered regions lie at residues 3491 to 3517 (TNTTTTITNPDGTTTTTTTPLPPPQQP) and 3821 to 3928 (SKFT…FSPL). One can recognise a PI3K/PI4K catalytic domain in the interval 4171–4541 (VCPRITLYGG…MLENRIDSLT (371 aa)). Residues 4177–4183 (LYGGNGK) form a G-loop region. The segment at 4312-4337 (NITEDNNISSSSSSSSSSGSNSGENS) is disordered. The span at 4320 to 4337 (SSSSSSSSSSGSNSGENS) shows a compositional bias: low complexity. The tract at residues 4400–4408 (DIGDIDPSK) is catalytic loop. The segment at 4429 to 4451 (NRKLGFDLLQDNPYNQQQLLRLS) is activation loop. In terms of domain architecture, FATC spans 4538–4582 (DSLTPSSQPDKTCFISPIVKKVNQLIQNSLSSNISQLDQLSCPWL).

The protein belongs to the PI3/PI4-kinase family. TRA1 subfamily.

This chain is Probable transcription-associated protein 1 (tra1), found in Dictyostelium discoideum (Social amoeba).